Here is a 421-residue protein sequence, read N- to C-terminus: Gamma-glutamyl phosphate reductase (421 aa).

This sequence belongs to the gamma-glutamyl phosphate reductase family.

The protein localises to the cytoplasm. The enzyme catalyses L-glutamate 5-semialdehyde + phosphate + NADP(+) = L-glutamyl 5-phosphate + NADPH + H(+). It functions in the pathway amino-acid biosynthesis; L-proline biosynthesis; L-glutamate 5-semialdehyde from L-glutamate: step 2/2. Its function is as follows. Catalyzes the NADPH-dependent reduction of L-glutamate 5-phosphate into L-glutamate 5-semialdehyde and phosphate. The product spontaneously undergoes cyclization to form 1-pyrroline-5-carboxylate. This chain is Gamma-glutamyl phosphate reductase, found in Ruegeria sp. (strain TM1040) (Silicibacter sp.).